The sequence spans 33 residues: Photosystem II reaction center protein Psb30 (33 aa).

Residues 5–25 (LALTLVSLVLVVSAGPLVVVL) traverse the membrane as a helical segment.

It belongs to the Psb30/Ycf12 family. As to quaternary structure, PSII is composed of 1 copy each of membrane proteins PsbA, PsbB, PsbC, PsbD, PsbE, PsbF, PsbH, PsbI, PsbJ, PsbK, PsbL, PsbM, PsbT, PsbX, PsbY, PsbZ, Psb30/Ycf12, peripheral proteins of the oxygen-evolving complex and a large number of cofactors. It forms dimeric complexes.

The protein resides in the plastid. The protein localises to the chloroplast thylakoid membrane. A core subunit of photosystem II (PSII), required for optimal photosynthesis, probably helps stabilize the reaction center. This chain is Photosystem II reaction center protein Psb30, found in Chlamydomonas reinhardtii (Chlamydomonas smithii).